Here is a 68-residue protein sequence, read N- to C-terminus: Large ribosomal subunit protein bL32 (68 aa).

Positions 1 to 20 (MAVQQNKVSKSRRNNRRAHD) are disordered.

Belongs to the bacterial ribosomal protein bL32 family.

This is Large ribosomal subunit protein bL32 from Ruegeria sp. (strain TM1040) (Silicibacter sp.).